The sequence spans 251 residues: MNLNSIPAFDDNYIWVLNDEAGRCLIVDPGDAEPVLNAIAANNWQPEAIFLTHHHHDHVGGVKELVKKFPQIVVYGPQETQDKGTTQVVKDGETAFVLGHEFSVIATPGHTLGHICYFSKPYLFCGDTLFSGGCGRLFEGTPSQMYQSLKKLSALPDDTLVCCAHEYTLSNMKFALSILPHDLSINDYYRKVKELRAKNQITLPVILKNERQINVFLRTEDIDLINVINEETLLQQPEERFAWLRSKKDRF.

Residues H53, H55, D57, H58, H110, D127, and H165 each coordinate Zn(2+).

The protein belongs to the metallo-beta-lactamase superfamily. Glyoxalase II family. As to quaternary structure, monomer. It depends on Zn(2+) as a cofactor.

The enzyme catalyses an S-(2-hydroxyacyl)glutathione + H2O = a 2-hydroxy carboxylate + glutathione + H(+). The protein operates within secondary metabolite metabolism; methylglyoxal degradation; (R)-lactate from methylglyoxal: step 2/2. Thiolesterase that catalyzes the hydrolysis of S-D-lactoyl-glutathione to form glutathione and D-lactic acid. The sequence is that of Hydroxyacylglutathione hydrolase from Escherichia fergusonii (strain ATCC 35469 / DSM 13698 / CCUG 18766 / IAM 14443 / JCM 21226 / LMG 7866 / NBRC 102419 / NCTC 12128 / CDC 0568-73).